Here is a 136-residue protein sequence, read N- to C-terminus: Sec-independent protein translocase protein TatB (136 aa).

The chain crosses the membrane as a helical span at residues Met-1 to Gly-21. Residues Tyr-89–Ser-136 form a disordered region. Polar residues predominate over residues Thr-99–Pro-115. Positions Ser-122–Ser-136 are enriched in basic and acidic residues.

The protein belongs to the TatB family. The Tat system comprises two distinct complexes: a TatABC complex, containing multiple copies of TatA, TatB and TatC subunits, and a separate TatA complex, containing only TatA subunits. Substrates initially bind to the TatABC complex, which probably triggers association of the separate TatA complex to form the active translocon.

It is found in the cell inner membrane. Part of the twin-arginine translocation (Tat) system that transports large folded proteins containing a characteristic twin-arginine motif in their signal peptide across membranes. Together with TatC, TatB is part of a receptor directly interacting with Tat signal peptides. TatB may form an oligomeric binding site that transiently accommodates folded Tat precursor proteins before their translocation. The polypeptide is Sec-independent protein translocase protein TatB (Hahella chejuensis (strain KCTC 2396)).